The following is a 421-amino-acid chain: Histidine--tRNA ligase (421 aa).

It belongs to the class-II aminoacyl-tRNA synthetase family.

Its subcellular location is the cytoplasm. It catalyses the reaction tRNA(His) + L-histidine + ATP = L-histidyl-tRNA(His) + AMP + diphosphate + H(+). This Pyrobaculum islandicum (strain DSM 4184 / JCM 9189 / GEO3) protein is Histidine--tRNA ligase.